A 459-amino-acid chain; its full sequence is Nucleobindin-1 (459 aa).

An N-terminal signal peptide occupies residues 1-25 (MPTSVPRGAPFLLLPPLLMLSAVLA). S85 is modified (phosphoserine). Position 147 is a phosphothreonine (T147). Residues 149 to 217 (EARDLELLIQ…QQRRHREHPK (69 aa)) are a coiled coil. The DNA-binding element occupies 171-217 (HHEEFKRYEMLKEHERRRYLESLGEEQRKEAERKLQEQQRRHREHPK). Positions 192 to 209 (SLGEEQRKEAERKLQEQQ) are enriched in basic and acidic residues. The disordered stretch occupies residues 192 to 220 (SLGEEQRKEAERKLQEQQRRHREHPKVNV). The binds to GNAI2 and GNAI3 stretch occupies residues 227-320 (LKEVWEELDG…VTLEEFLAST (94 aa)). EF-hand domains are found at residues 239 to 274 (PNRF…ELEK) and 291 to 326 (ERLR…KEFG). Ca(2+) is bound by residues D252, N254, D256, E263, D304, N306, D308, and E315. The short motif at 302–332 (NVDTNQDRLVTLEEFLASTQRKEFGETAEGW) is the GBA element. Residues 340-407 (AYTEEELKRF…RKQQQQEQSA (68 aa)) adopt a coiled-coil conformation. S368 carries the post-translational modification Phosphoserine. Residues 393 to 459 (LQMEQRKQQQ…VLPQLDSQHL (67 aa)) form a disordered region. A compositionally biased stretch (basic and acidic residues) spans 433 to 445 (DQKDVPASEKKVP). Residue S456 is modified to Phosphoserine.

The protein belongs to the nucleobindin family. In terms of assembly, interacts (via GBA motif) with guanine nucleotide-binding protein G(i) alpha subunits GNAI1, GNAI2 and GNAI3 with higher affinity for GNAI1 and GNAI3 than for GNAI2. Preferentially interacts with inactive rather than active GNAI3. Interaction with GNAI3 is inhibited when NUCB1 binds calcium, probably due to a conformational change which renders the GBA motif inaccessible. As to expression, minor constituent of the mineralized matrix of bone. Detected in calvaria, rib cartilage, liver, kidney, spleen, brain, lung, skeletal and heart muscle with highest expression in calvaria and approximately half the amount in kidney, liver and brain.

Its subcellular location is the golgi apparatus. It is found in the cis-Golgi network membrane. The protein resides in the cytoplasm. The protein localises to the secreted. Functionally, major calcium-binding protein of the Golgi which may have a role in calcium homeostasis. Acts as a non-receptor guanine nucleotide exchange factor which binds to and activates alpha subunits of guanine nucleotide-binding proteins (G proteins). This Rattus norvegicus (Rat) protein is Nucleobindin-1 (Nucb1).